The chain runs to 231 residues: DNA mismatch repair protein MutH (231 aa).

The protein belongs to the MutH family.

It is found in the cytoplasm. In terms of biological role, sequence-specific endonuclease that cleaves unmethylated GATC sequences. It is involved in DNA mismatch repair. In Salmonella typhi, this protein is DNA mismatch repair protein MutH.